Here is a 460-residue protein sequence, read N- to C-terminus: Ammonium transporter Rh type B (460 aa).

Residues 1–10 (MTGYSTNMRI) lie on the Cytoplasmic side of the membrane. The chain crosses the membrane as a helical span at residues 11 to 31 (KLPVFCLLLEFITIILFAVFV). The Extracellular portion of the chain corresponds to 32 to 62 (RYDHESDAKQWHDEMRNHSVQNAENDFYFRY). Residue Asn-48 is glycosylated (N-linked (GlcNAc...) asparagine). The helical transmembrane segment at 63-83 (PSFQDVHVMIFIGFGFLMTFL) threads the bilayer. The Cytoplasmic portion of the chain corresponds to 84 to 87 (KRYG). Residues 88–108 (FSSVAFNFLIAAFGLQWSTLI) traverse the membrane as a helical segment. At 109–125 (QGFFHGFHDGKIHVGIE) the chain is on the extracellular side. The chain crosses the membrane as a helical span at residues 126–146 (SMINADFCTGAVLISFGAVLG). The Cytoplasmic segment spans residues 147 to 150 (KTSP). Residues 151–171 (VQLIVMTLIEVTLFGINEYII) traverse the membrane as a helical segment. Residues 172–179 (LNIVGAKD) lie on the Extracellular side of the membrane. Residues 180 to 202 (AGGSMTIHTFGAYFGLIVSRVLY) traverse the membrane as a helical segment. The Cytoplasmic segment spans residues 203 to 220 (RDDLEKSRQREGSVYHSD). A helical membrane pass occupies residues 221–241 (LFAMIGTIYLWMFWPSFNSAI). Over 242-252 (TAHGDDQHRTV) the chain is Extracellular. A helical transmembrane segment spans residues 253–273 (MNTYYSLAACTLATFGFSALL). Residues 274 to 283 (NGEGKLDMVH) are Cytoplasmic-facing. The helical transmembrane segment at 284-304 (IQNAALAGGVAVGTSGEMMLT) threads the bilayer. Residue Pro-305 is a topological domain, extracellular. Residues 306-326 (FGAMIAGTLAGMISVLGYKYL) form a helical membrane-spanning segment. Residues 327 to 347 (TPVLDSKLKIQDTCGVHNLHG) are Cytoplasmic-facing. A helical membrane pass occupies residues 348-368 (MPGILGALIGAIVALFATAEI). At 369–394 (YGAGMEDVFPLISDGSRTAKQQSLYQ) the chain is on the extracellular side. The helical transmembrane segment at 395–415 (FLALLVALGFAILGGLVVGFI) threads the bilayer. Over 416–460 (LKLPIFGTPSDAECFEDAVYWEVPGGEGHQQLTVVINNEDPDTQA) the chain is Cytoplasmic.

The protein belongs to the ammonium transporter (TC 2.A.49) family. Rh subfamily.

Its subcellular location is the basolateral cell membrane. The protein resides in the cytoplasmic vesicle membrane. Functions as a specific ammonium transporter. The chain is Ammonium transporter Rh type B (rhbg) from Xenopus tropicalis (Western clawed frog).